Here is a 206-residue protein sequence, read N- to C-terminus: Thiamine-phosphate synthase (206 aa).

4-amino-2-methyl-5-(diphosphooxymethyl)pyrimidine contacts are provided by residues Gln38 to Lys42 and Asn70. Residues Asp71 and Asp90 each coordinate Mg(2+). Ser107 is a 4-amino-2-methyl-5-(diphosphooxymethyl)pyrimidine binding site. Residue Thr133 to Thr135 coordinates 2-[(2R,5Z)-2-carboxy-4-methylthiazol-5(2H)-ylidene]ethyl phosphate. 4-amino-2-methyl-5-(diphosphooxymethyl)pyrimidine is bound at residue Lys136. 2-[(2R,5Z)-2-carboxy-4-methylthiazol-5(2H)-ylidene]ethyl phosphate contacts are provided by residues Gly164 and Val184 to Ser185.

Belongs to the thiamine-phosphate synthase family. Requires Mg(2+) as cofactor.

The enzyme catalyses 2-[(2R,5Z)-2-carboxy-4-methylthiazol-5(2H)-ylidene]ethyl phosphate + 4-amino-2-methyl-5-(diphosphooxymethyl)pyrimidine + 2 H(+) = thiamine phosphate + CO2 + diphosphate. It carries out the reaction 2-(2-carboxy-4-methylthiazol-5-yl)ethyl phosphate + 4-amino-2-methyl-5-(diphosphooxymethyl)pyrimidine + 2 H(+) = thiamine phosphate + CO2 + diphosphate. The catalysed reaction is 4-methyl-5-(2-phosphooxyethyl)-thiazole + 4-amino-2-methyl-5-(diphosphooxymethyl)pyrimidine + H(+) = thiamine phosphate + diphosphate. It functions in the pathway cofactor biosynthesis; thiamine diphosphate biosynthesis; thiamine phosphate from 4-amino-2-methyl-5-diphosphomethylpyrimidine and 4-methyl-5-(2-phosphoethyl)-thiazole: step 1/1. In terms of biological role, condenses 4-methyl-5-(beta-hydroxyethyl)thiazole monophosphate (THZ-P) and 2-methyl-4-amino-5-hydroxymethyl pyrimidine pyrophosphate (HMP-PP) to form thiamine monophosphate (TMP). This chain is Thiamine-phosphate synthase, found in Herpetosiphon aurantiacus (strain ATCC 23779 / DSM 785 / 114-95).